Consider the following 233-residue polypeptide: MSVHIEAKQGEIAETILLPGDPLRAKYIAETFLEDVVLFNQVRGMLGFTGTYKGEKVSVMGTGMGIPSISIYVNELIQSYDVKNLIRVGTMGGIQADVKVRDVVIAQAASTDSQINRNTFAGVDFAPVADFSLLKKAYDAGIEKGLSLKVGNVFSADRFYNDQLDKQQLADYGVLGIEMEAAALYTLAQKYGRRALAILTVSDHIFTGEETSAEERQTTFNDMIVVALEAAIK.

Histidine 4 is an a purine D-ribonucleoside binding site. Residues glycine 20, arginine 24, arginine 43, and arginine 87–threonine 90 contribute to the phosphate site. Residues glutamate 178 to glutamate 180 and serine 202 to aspartate 203 contribute to the a purine D-ribonucleoside site. Aspartate 203 serves as the catalytic Proton donor.

This sequence belongs to the PNP/UDP phosphorylase family. Homohexamer; trimer of homodimers.

The enzyme catalyses a purine D-ribonucleoside + phosphate = a purine nucleobase + alpha-D-ribose 1-phosphate. It carries out the reaction a purine 2'-deoxy-D-ribonucleoside + phosphate = a purine nucleobase + 2-deoxy-alpha-D-ribose 1-phosphate. Functionally, catalyzes the reversible phosphorolytic breakdown of the N-glycosidic bond in the beta-(deoxy)ribonucleoside molecules, with the formation of the corresponding free purine bases and pentose-1-phosphate. In Listeria monocytogenes serotype 4b (strain CLIP80459), this protein is Purine nucleoside phosphorylase DeoD-type.